The primary structure comprises 435 residues: NADH-quinone oxidoreductase subunit D (435 aa).

It belongs to the complex I 49 kDa subunit family. NDH-1 is composed of 14 different subunits. Subunits NuoB, C, D, E, F, and G constitute the peripheral sector of the complex.

It localises to the cell inner membrane. It carries out the reaction a quinone + NADH + 5 H(+)(in) = a quinol + NAD(+) + 4 H(+)(out). Its function is as follows. NDH-1 shuttles electrons from NADH, via FMN and iron-sulfur (Fe-S) centers, to quinones in the respiratory chain. The immediate electron acceptor for the enzyme in this species is believed to be ubiquinone. Couples the redox reaction to proton translocation (for every two electrons transferred, four hydrogen ions are translocated across the cytoplasmic membrane), and thus conserves the redox energy in a proton gradient. The sequence is that of NADH-quinone oxidoreductase subunit D from Xylella fastidiosa (strain 9a5c).